The following is an 87-amino-acid chain: Small ribosomal subunit protein bS18 (87 aa).

Over residues Met1–Arg10 the composition is skewed to basic and acidic residues. The segment at Met1–Ala23 is disordered.

The protein belongs to the bacterial ribosomal protein bS18 family. In terms of assembly, part of the 30S ribosomal subunit. Forms a tight heterodimer with protein bS6.

Functionally, binds as a heterodimer with protein bS6 to the central domain of the 16S rRNA, where it helps stabilize the platform of the 30S subunit. This is Small ribosomal subunit protein bS18 from Clavibacter michiganensis subsp. michiganensis (strain NCPPB 382).